The primary structure comprises 554 residues: Formate--tetrahydrofolate ligase (554 aa).

65–72 provides a ligand contact to ATP; that stretch reads TPAGEGKT.

Belongs to the formate--tetrahydrofolate ligase family.

It catalyses the reaction (6S)-5,6,7,8-tetrahydrofolate + formate + ATP = (6R)-10-formyltetrahydrofolate + ADP + phosphate. Its pathway is one-carbon metabolism; tetrahydrofolate interconversion. The polypeptide is Formate--tetrahydrofolate ligase (Petrotoga mobilis (strain DSM 10674 / SJ95)).